The sequence spans 356 residues: Cytochrome b translation regulator cbp7 (356 aa).

In terms of assembly, component of a complex, at least composed of cbp7 and cbp8.

The protein resides in the mitochondrion. In terms of biological role, translation factor for cob1/cytochrome b; plays a role in cob1 mRNA stabilization and required for correct folding of the protein. The sequence is that of Cytochrome b translation regulator cbp7 from Schizosaccharomyces pombe (strain 972 / ATCC 24843) (Fission yeast).